The primary structure comprises 1235 residues: Topoisomerase 1-associated factor 1 (1235 aa).

Disordered regions lie at residues 327–357 (RERK…GPPV), 584–610 (GEEA…HAER), 812–841 (EGAA…TEAR), and 897–1235 (EFSP…SDEE). Over residues 585–603 (EEAEDVGVPEDNDADDSGD) the composition is skewed to acidic residues. Over residues 929-947 (DDDEEEIRGFLGDDDDEDF) the composition is skewed to acidic residues. Positions 964 to 973 (QKKRQRKRRR) are enriched in basic residues. Positions 977–986 (SGDEEDEGVS) are enriched in acidic residues. Residues 999–1044 (EKELEKIRKIKSEMYVHASDDETDDERDREFFERERKRQETKDSKF) show a composition bias toward basic and acidic residues. 2 stretches are compositionally biased toward acidic residues: residues 1070 to 1081 (VLDDEPESDESE) and 1099 to 1118 (SEEE…SDEE). Basic residues predominate over residues 1124 to 1150 (AKSKTSKRKAAVPSKRPARRPGTAKKR). Positions 1156–1170 (SDNDEDEDEEEDAMD) are enriched in acidic residues. The span at 1193–1202 (LGRRIDKMAM) shows a compositional bias: basic and acidic residues. Acidic residues predominate over residues 1203-1212 (DDGDEDEDDQ).

Belongs to the timeless family. As to quaternary structure, component of the fork protection complex (FPC) consisting of tof-1 and csm-3.

The protein localises to the nucleus. In terms of biological role, forms a fork protection complex (FPC) with csm-3 and which is required for chromosome segregation during meiosis and DNA damage repair. FPC coordinates leading and lagging strand synthesis and moves with the replication fork. FPC stabilizes replication forks in a configuration that is recognized by replication checkpoint sensors. This chain is Topoisomerase 1-associated factor 1 (tof-1), found in Neurospora crassa (strain ATCC 24698 / 74-OR23-1A / CBS 708.71 / DSM 1257 / FGSC 987).